Reading from the N-terminus, the 1093-residue chain is Regulator of nonsense transcripts 1 homolog (1093 aa).

A disordered region spans residues tyrosine 42–valine 79. Over residues aspartate 61 to serine 75 the composition is skewed to acidic residues. Residues glutamate 95–alanine 252 enclose the Upf1 CH-rich domain. Zn(2+) is bound by residues cysteine 103, cysteine 106, cysteine 117, cysteine 120, cysteine 125, histidine 135, histidine 139, histidine 145, cysteine 163, cysteine 166, cysteine 189, and cysteine 193. A C3H region spans residues cysteine 103–histidine 135. A CC/SHH/C region spans residues cysteine 117–histidine 145. The interval cysteine 163 to cysteine 193 is C4. ATP is bound by residues glutamine 460, glycine 480–threonine 484, glutamine 650, tyrosine 687, and glutamate 818.

Belongs to the DNA2/NAM7 helicase family.

It localises to the cytoplasm. The enzyme catalyses ATP + H2O = ADP + phosphate + H(+). In terms of biological role, RNA-dependent helicase required for nonsense-mediated decay (NMD) of aberrant mRNAs containing premature stop codons and modulates the expression level of normal mRNAs. Also capable of unwinding double-stranded DNA and translocating on single-stranded DNA. This chain is Regulator of nonsense transcripts 1 homolog, found in Neurospora crassa (strain ATCC 24698 / 74-OR23-1A / CBS 708.71 / DSM 1257 / FGSC 987).